A 573-amino-acid chain; its full sequence is Diflavin flavoprotein A 1 (573 aa).

Residues 43–236 are zinc metallo-hydrolase; the sequence is QNGTTYNSYL…GTISTVANGH (194 aa). 6 residues coordinate Fe cation: histidine 92, glutamate 94, aspartate 96, histidine 159, aspartate 178, and histidine 236. A Flavodoxin-like domain is found at 265–401; it reads VVVFYVADYG…LCDESGTDLG (137 aa). Residues 424 to 573 form a flavodoxin-reductase-like region; sequence IGRISGGLYI…VHHRKVGNYY (150 aa).

It in the N-terminal section; belongs to the zinc metallo-hydrolase group 3 family. This sequence in the C-terminal section; belongs to the flavodoxin reductase family. In terms of assembly, homodimer. Requires Fe cation as cofactor. It depends on FAD as a cofactor. FMN is required as a cofactor.

In terms of biological role, mediates electron transfer from NADH to oxygen, reducing it to water. This modular protein has 3 redox cofactors, in other organisms the same activity requires 2 or 3 proteins. In Synechocystis sp. (strain ATCC 27184 / PCC 6803 / Kazusa), this protein is Diflavin flavoprotein A 1 (dfa1).